The chain runs to 361 residues: Cytochrome c peroxidase, mitochondrial (361 aa).

A mitochondrion-targeting transit peptide spans 1 to 67 (MTTAVRLLPS…NWGKAAALAS (67 aa)). The active-site Proton acceptor is H119. A Phosphotyrosine modification is found at Y220. H242 provides a ligand contact to heme b. W258 acts as the Tryptophan radical intermediate in catalysis.

This sequence belongs to the peroxidase family. Cytochrome c peroxidase subfamily. In terms of assembly, forms a one-to-one complex with cytochrome c. It depends on heme b as a cofactor. In terms of processing, CCP1 precursor is processed by the rhomboid protease PCP1, which cleaves the N-terminal hydrophobic transit peptide. The m-AAA protease (composed of YTA12/RCA1 and YTA10/AFG3) is required for CCP1 maturation: m-AAA protease promotes membrane dislocation of the CCP1 transmembrane segment within the transit peptide to ensure the correct positioning of CCP1 within the membrane bilayer, allowing intramembrane cleavage by PCP1.

The protein localises to the mitochondrion matrix. Its subcellular location is the mitochondrion intermembrane space. The catalysed reaction is 2 Fe(II)-[cytochrome c] + H2O2 + 2 H(+) = 2 Fe(III)-[cytochrome c] + 2 H2O. Destroys radicals which are normally produced within the cells and which are toxic to biological systems. The sequence is that of Cytochrome c peroxidase, mitochondrial (CCP1) from Saccharomyces cerevisiae (strain ATCC 204508 / S288c) (Baker's yeast).